Reading from the N-terminus, the 460-residue chain is MRILFVSAEATPLAKVGGMADVVGALPKVLRKMGHDVRIFMPYYGFLGDKMEVPEEPIWEGTAMYQNFKIYETVLPKSDVPLYLFGHPAFWPRHIYYGDDEDWRFTLFANGAAEFCWNGWKPEIVHCNDWHTGMIPVWMHETPDIKTVFTIHNLAYQGPWRWYLERITWCPWYMEGHNTMAAAVQFADRVTTVSPTYASQIQTPAYGENLDGLMSFITGKLHGILNGIDMNFYNPANDRYIPQTYDVNTLEKRVDNKIALQEEVGFEVNKNSFLMGMVSRLVEQKGLDLMLQVLDRFMAYTDTQFILLGTGDRFYETQMWQIASRYPGRMSVQLLHNDALSRRIYAGTDAFLMPSRFEPCGISQLLAMRYGSIPIVRRTGGLVDTVSFYDPINNVGTGYSFDRYEPLDLLTAMVRAYEGFRFKDQWQELQKRGMRENFSWDKSAQGYIKMYKSMLGLPEE.

Residue Lys-15 coordinates ADP-alpha-D-glucose.

It belongs to the glycosyltransferase 1 family. Bacterial/plant glycogen synthase subfamily.

The catalysed reaction is [(1-&gt;4)-alpha-D-glucosyl](n) + ADP-alpha-D-glucose = [(1-&gt;4)-alpha-D-glucosyl](n+1) + ADP + H(+). It functions in the pathway glycan biosynthesis; glycogen biosynthesis. Functionally, synthesizes alpha-1,4-glucan chains using ADP-glucose. The protein is Glycogen synthase of Trichodesmium erythraeum (strain IMS101).